Reading from the N-terminus, the 151-residue chain is D-aminoacyl-tRNA deacylase (151 aa).

The short motif at Gly137–Pro138 is the Gly-cisPro motif, important for rejection of L-amino acids element.

This sequence belongs to the DTD family. In terms of assembly, homodimer.

It localises to the cytoplasm. The enzyme catalyses glycyl-tRNA(Ala) + H2O = tRNA(Ala) + glycine + H(+). The catalysed reaction is a D-aminoacyl-tRNA + H2O = a tRNA + a D-alpha-amino acid + H(+). Its function is as follows. An aminoacyl-tRNA editing enzyme that deacylates mischarged D-aminoacyl-tRNAs. Also deacylates mischarged glycyl-tRNA(Ala), protecting cells against glycine mischarging by AlaRS. Acts via tRNA-based rather than protein-based catalysis; rejects L-amino acids rather than detecting D-amino acids in the active site. By recycling D-aminoacyl-tRNA to D-amino acids and free tRNA molecules, this enzyme counteracts the toxicity associated with the formation of D-aminoacyl-tRNA entities in vivo and helps enforce protein L-homochirality. This is D-aminoacyl-tRNA deacylase from Azoarcus sp. (strain BH72).